Reading from the N-terminus, the 512-residue chain is Gamma-aminobutyric acid receptor subunit beta-2 (512 aa).

The N-terminal stretch at 1 to 25 (MWRVRKRGYFGIWSFPLIIAAVCAQ) is a signal peptide. The Extracellular portion of the chain corresponds to 26–241 (SVNDPSNMSL…LSLSFKLKRN (216 aa)). Residues asparagine 32 and asparagine 104 are each glycosylated (N-linked (GlcNAc...) asparagine). Tyrosine 121 is a histamine binding site. Cysteine 160 and cysteine 174 are joined by a disulfide. N-linked (GlcNAc...) asparagine glycosylation is present at asparagine 173. Histamine is bound by residues 180–181 (SY) and threonine 226. The 4-aminobutanoate site is built by tyrosine 181 and threonine 226. Residues 242-262 (IGYFILQTYMPSILITILSWV) traverse the membrane as a helical segment. Residues 263 to 272 (SFWINYDASA) are Cytoplasmic-facing. Residues 273-292 (ARVALGITTVLTMTTINTHL) traverse the membrane as a helical segment. Residues 293-310 (RETLPKIPYVKAIDMYLM) are Extracellular-facing. The helical transmembrane segment at 311–331 (GCFVFVFMALLEYALVNYIFF) threads the bilayer. Over 332–490 (GRGPQRQKKA…LTDVNAIDRW (159 aa)) the chain is Cytoplasmic. The residue at position 441 (tyrosine 441) is a Phosphotyrosine. Residues 491–511 (SRIFFPVVFSFFNIVYWLYYV) form a helical membrane-spanning segment. A topological domain (extracellular) is located at residue asparagine 512.

Belongs to the ligand-gated ion channel (TC 1.A.9) family. Gamma-aminobutyric acid receptor (TC 1.A.9.5) subfamily. GABRB2 sub-subfamily. As to quaternary structure, heteropentamer, formed by a combination of alpha (GABRA1-6), beta (GABRB1-3), gamma (GABRG1-3), delta (GABRD), epsilon (GABRE), rho (GABRR1-3), pi (GABRP) and theta (GABRQ) chains, each subunit exhibiting distinct physiological and pharmacological properties. Interacts with UBQLN1. May interact with KIF21B. Identified in a complex of 720 kDa composed of LHFPL4, NLGN2, GABRA1, GABRB2, GABRG2 and GABRB3. In terms of tissue distribution, isoform 1 and isoform 2 show reduced expression in schizophrenic brain. Isoform 3 shows increased expression in schizophrenic and bipolar disorder brains while isoform 4 shows reduced expression.

The protein resides in the postsynaptic cell membrane. It is found in the cell membrane. Its subcellular location is the cytoplasmic vesicle membrane. The enzyme catalyses chloride(in) = chloride(out). Its activity is regulated as follows. Allosterically activated by benzodiazepines. Allosterically activated by the anesthetic etomidate. Inhibited by the antagonist bicuculline. Potentiated by histamine. Beta subunit of the heteropentameric ligand-gated chloride channel gated by gamma-aminobutyric acid (GABA), a major inhibitory neurotransmitter in the brain. GABA-gated chloride channels, also named GABA(A) receptors (GABAAR), consist of five subunits arranged around a central pore and contain GABA active binding site(s) located at the alpha and beta subunit interface(s). When activated by GABA, GABAARs selectively allow the flow of chloride anions across the cell membrane down their electrochemical gradient. Chloride influx into the postsynaptic neuron following GABAAR opening decreases the neuron ability to generate a new action potential, thereby reducing nerve transmission. GABAARs containing alpha-1 and beta-2 or -3 subunits exhibit synaptogenic activity; the gamma-2 subunit being necessary but not sufficient to induce rapid synaptic contacts formation. Extrasynaptic beta-2 receptors contribute to the tonic GABAergic inhibition. Beta-containing GABAARs can simultaneously bind GABA and histamine where histamine binds at the interface of two neighboring beta subunits, which may be involved in the regulation of sleep and wakefulness. This chain is Gamma-aminobutyric acid receptor subunit beta-2, found in Homo sapiens (Human).